The chain runs to 250 residues: ATP synthase subunit a (250 aa).

Transmembrane regions (helical) follow at residues 29 to 49, 84 to 104, 114 to 134, 143 to 163, 193 to 213, and 216 to 236; these read ASLFMAASAAVAVGFLYFATS, FFPLVFSLFMFVLTANLLGMF, IIVTFALAILVIGTVLVYGFY, VFVPSGVPGILLPLVVAIEII, FVASLGALGAVGVGGAVLPLI, and VALTGLEFLVAFLQAYVFAVL.

Belongs to the ATPase A chain family. In terms of assembly, F-type ATPases have 2 components, CF(1) - the catalytic core - and CF(0) - the membrane proton channel. CF(1) has five subunits: alpha(3), beta(3), gamma(1), delta(1), epsilon(1). CF(0) has three main subunits: a(1), b(2) and c(9-12). The alpha and beta chains form an alternating ring which encloses part of the gamma chain. CF(1) is attached to CF(0) by a central stalk formed by the gamma and epsilon chains, while a peripheral stalk is formed by the delta and b chains.

It localises to the cell inner membrane. Functionally, key component of the proton channel; it plays a direct role in the translocation of protons across the membrane. The protein is ATP synthase subunit a of Rhizobium etli (strain CIAT 652).